Consider the following 443-residue polypeptide: Probable D-serine dehydratase (443 aa).

Residue K116 is modified to N6-(pyridoxal phosphate)lysine.

The protein belongs to the serine/threonine dehydratase family. DsdA subfamily. Pyridoxal 5'-phosphate is required as a cofactor.

The catalysed reaction is D-serine = pyruvate + NH4(+). This chain is Probable D-serine dehydratase, found in Bacillus cereus (strain AH187).